Here is a 257-residue protein sequence, read N- to C-terminus: Protein windbeutel (257 aa).

A signal peptide spans 1-21 (MMHILVTLLLVAIHSIPTTWA). The interval 24 to 27 (CTGC) is CXXC motif. The short motif at 254–257 (KEEL) is the Prevents secretion from ER element.

As to quaternary structure, homodimer. Interacts with pip; the interaction is direct and does not require pip to be folded. In terms of tissue distribution, briefly expressed in the follicle cells of the ovary, at around the time when the dorsoventral axis of the egg chamber is first established.

The protein resides in the endoplasmic reticulum lumen. Probable chaperone protein involved in dorsoventral axis patterning in early embryos. Probably acts by folding and targeting pipe (pip) into the Golgi. The sequence is that of Protein windbeutel from Drosophila melanogaster (Fruit fly).